The chain runs to 701 residues: Polyribonucleotide nucleotidyltransferase (701 aa).

Residues aspartate 487 and aspartate 493 each coordinate Mg(2+). Positions 554–613 (PTMIAMKIDTDKIRDVIGKGGATIRAICEETKASIDIEDDGSIKIFGETKEAAEAARQRV) constitute a KH domain. An S1 motif domain is found at 623–691 (GKIYVGKVER…NRGRIKLSIK (69 aa)).

The protein belongs to the polyribonucleotide nucleotidyltransferase family. Component of the RNA degradosome, which is a multiprotein complex involved in RNA processing and mRNA degradation. Mg(2+) is required as a cofactor.

The protein localises to the cytoplasm. It carries out the reaction RNA(n+1) + phosphate = RNA(n) + a ribonucleoside 5'-diphosphate. In terms of biological role, involved in mRNA degradation. Catalyzes the phosphorolysis of single-stranded polyribonucleotides processively in the 3'- to 5'-direction. This Pseudomonas fluorescens (strain SBW25) protein is Polyribonucleotide nucleotidyltransferase.